The following is a 536-amino-acid chain: Allene oxide synthase, chloroplastic (536 aa).

The transit peptide at 1–58 directs the protein to the chloroplast; sequence MASSALNNLVAVNPNTLSPSPKSTPLPNTFSNLRRVSAFRPIKASLFGDSPIKIPGIT. 3 residues coordinate heme b: Lys-151, His-182, and Lys-186. (13S)-hydroperoxy-(9Z,11E)-octadecadienoate-binding residues include Ser-262, Asn-339, and Lys-345. (13S)-hydroperoxy-(9Z,11E,15Z)-octadecatrienoate is bound at residue Asn-339. 2 residues coordinate heme b: Lys-487 and Cys-489.

The protein belongs to the cytochrome P450 family. The cofactor is heme b.

The protein resides in the plastid. It localises to the chloroplast. It catalyses the reaction (13S)-hydroperoxy-(9Z,11E,15Z)-octadecatrienoate = (9Z,13S,15Z)-12,13-epoxyoctadeca-9,11,15-trienoate + H2O. The catalysed reaction is (13S)-hydroperoxy-(9Z,11E)-octadecadienoate = (9Z,13S)-12,13-epoxyoctadeca-9,11-dienoate + H2O. It participates in lipid metabolism; oxylipin biosynthesis. Cytochrome P450 enzyme involved in the biosynthesis of oxylipin jasmonates, important phytohormones acting as growth regulators and signaling molecules for plant defense. Functions as an allene oxide synthase that converts hydroperoxy fatty acids to unstable allene epoxides. Catalyzes the dehydration of 13-HPOTE ((13S)-hydroperoxy-(9Z,11E,15Z)-octadecatrienoate), as well as 13-HPODE ((13S)-hydroperoxy-(9Z,11E)-octadecadienoate). The protein is Allene oxide synthase, chloroplastic (CYP74A) of Linum usitatissimum (Flax).